Reading from the N-terminus, the 405-residue chain is MARANKVVLAYSGGVDTSVCIPYLKHEWGVEEVITFAADLGQGDELEPIRQKALDAGASQSLVGDLIEPFITEFAFPAIRANALYEGRYPLSTALARPLIARRLVEIAREVGADAVAHGCTGKGNDQVRFDVAIGALAPDLKVLTPAREWGMSREETIAYGERYGLPSPVSKRSPYSIDLNLLGRSIEAGPLEDPDVEPPEEVFAMTCSTEAAPAQPELVSIGFEAGLPVSINGQRLDPVSLIREANRLAGSHGFGRLDMIENRVVGIKSREIYETPGLLLLIQAHQELESLTLAADVLRTKRQLEMQWADLVYQGLWFGPLKDALDGFIERTQLTVNGSVRIKLHRGSATVVGRSSSDSLYEPDMATYGAEDQFDHRAASGFIYVWGLPTRLWAAAKRRRGHHG.

ATP contacts are provided by residues Ala-10–Ser-18 and Ala-38. Tyr-89 is an L-citrulline binding site. Gly-119 is a binding site for ATP. L-aspartate contacts are provided by Thr-121, Asn-125, and Asp-126. Residue Asn-125 participates in L-citrulline binding. L-citrulline-binding residues include Arg-129, Ser-177, Ser-186, Glu-262, and Tyr-274.

Belongs to the argininosuccinate synthase family. Type 1 subfamily. In terms of assembly, homotetramer.

It is found in the cytoplasm. It catalyses the reaction L-citrulline + L-aspartate + ATP = 2-(N(omega)-L-arginino)succinate + AMP + diphosphate + H(+). It functions in the pathway amino-acid biosynthesis; L-arginine biosynthesis; L-arginine from L-ornithine and carbamoyl phosphate: step 2/3. In Synechococcus sp. (strain RCC307), this protein is Argininosuccinate synthase.